A 200-amino-acid chain; its full sequence is Adenylyl-sulfate kinase (200 aa).

ATP is bound at residue 35–42 (GLPASGKS). Catalysis depends on Ser-109, which acts as the Phosphoserine intermediate.

This sequence belongs to the APS kinase family.

It carries out the reaction adenosine 5'-phosphosulfate + ATP = 3'-phosphoadenylyl sulfate + ADP + H(+). It participates in sulfur metabolism; hydrogen sulfide biosynthesis; sulfite from sulfate: step 2/3. Catalyzes the synthesis of activated sulfate. The chain is Adenylyl-sulfate kinase from Thermodesulfovibrio yellowstonii (strain ATCC 51303 / DSM 11347 / YP87).